Here is a 235-residue protein sequence, read N- to C-terminus: Serine/arginine-rich splicing factor 7 (235 aa).

The 74-residue stretch at 11 to 84 (TKVYVGNLGT…SRVRVELSTG (74 aa)) folds into the RRM domain. Position 24 is an N6-acetyllysine; alternate (K24). Residue K24 forms a Glycyl lysine isopeptide (Lys-Gly) (interchain with G-Cter in SUMO2); alternate linkage. S32 is subject to Phosphoserine. Residues 81–98 (LSTGMPRRSRFDRPPARR) are sufficient for interaction with NXF1. The CCHC-type zinc finger occupies 104-120 (DRCYECGEKGHYAYDCH). Basic residues predominate over residues 123–180 (SRRRRSRSRSRSHSRSRGRRYSRSRSRSRGRRSRSASPRRSRSVSLRRSRSASLRRSR). The interval 123–235 (SRRRRSRSRS…RRSASPERVD (113 aa)) is disordered. Tandem repeats lie at residues 153–160 (RRSRSASP), 161–168 (RRSRSVSL), 169–176 (RRSRSASL), and 177–184 (RRSRSGSI). Residues 153 to 223 (RRSRSASPRR…SPKRSRSPSG (71 aa)) are 6 X 8 AA repeats of R-R-S-R-S-X-S-X. A phosphoserine mark is found at S163, S165, and S167. Residues S181, S183, S189, S191, and S193 each carry the phosphoserine modification. Residues 187–219 (SRSRSRSRSRSRSLSRPRSSRSKSRSPSPKRSR) are compositionally biased toward basic residues. Residues 208–215 (SKSRSPSP) form a 5; approximate repeat. One copy of the 6; approximate repeat lies at 216–223 (KRSRSPSG). Phosphoserine occurs at positions 228 and 230.

It belongs to the splicing factor SR family. As to quaternary structure, found in large molecular weight complexes containing CCNL1 and the p110 isoforms of either CDC2L1 or CDC2L2. Interacts with CCNL2 and CPSF6. Interacts with NXF1. Interacts with YTHDC1. Extensively phosphorylated on serine residues in the RS domain.

Its subcellular location is the nucleus. It localises to the cytoplasm. In terms of biological role, required for pre-mRNA splicing. Represses the splicing of MAPT/Tau exon 10. May function as export adapter involved in mRNA nuclear export such as of histone H2A. Binds mRNA which is thought to be transferred to the NXF1-NXT1 heterodimer for export (TAP/NXF1 pathway); enhances NXF1-NXT1 RNA-binding activity. RNA-binding is semi-sequence specific. The chain is Serine/arginine-rich splicing factor 7 (SRSF7) from Bos taurus (Bovine).